Here is a 576-residue protein sequence, read N- to C-terminus: Alkaline phosphatase PhoD (576 aa).

A signal peptide spans 1–32 (MNSLLHHSFLKTVFSSLAIAIVTSSLSSVTIA). The Zn(2+) site is built by Asp68 and Thr107. The Phosphothreonine intermediate role is filled by Thr107. A disulfide bond links Cys108 and Cys144. Residues Asn128 and 188-190 (KDR) each bind substrate. An intrachain disulfide couples Cys248 to Cys332. Asp318, His322, Asp363, His364, and His508 together coordinate Zn(2+). A disulfide bridge links Cys562 with Cys573.

Monomer. Zn(2+) is required as a cofactor.

It catalyses the reaction a phosphate monoester + H2O = an alcohol + phosphate. Functionally, alkaline phosphatase with broad substrate specificity. Has phosphatase activity towards nucleotide and sugar phosphates with a preference to nucleotide phosphates. Has no phosphodiesterase activity. This chain is Alkaline phosphatase PhoD, found in Zymomonas mobilis subsp. mobilis (strain ATCC 31821 / ZM4 / CP4).